Reading from the N-terminus, the 238-residue chain is 2-C-methyl-D-erythritol 4-phosphate cytidylyltransferase (238 aa).

It belongs to the IspD/TarI cytidylyltransferase family. IspD subfamily.

It carries out the reaction 2-C-methyl-D-erythritol 4-phosphate + CTP + H(+) = 4-CDP-2-C-methyl-D-erythritol + diphosphate. It participates in isoprenoid biosynthesis; isopentenyl diphosphate biosynthesis via DXP pathway; isopentenyl diphosphate from 1-deoxy-D-xylulose 5-phosphate: step 2/6. Its function is as follows. Catalyzes the formation of 4-diphosphocytidyl-2-C-methyl-D-erythritol from CTP and 2-C-methyl-D-erythritol 4-phosphate (MEP). The chain is 2-C-methyl-D-erythritol 4-phosphate cytidylyltransferase from Pelotomaculum thermopropionicum (strain DSM 13744 / JCM 10971 / SI).